A 956-amino-acid polypeptide reads, in one-letter code: Replication factor C subunit 1 (956 aa).

Composition is skewed to basic and acidic residues over residues 1 to 15 (MSDIRKWFMKAHEKG) and 50 to 74 (TADRRKTSKYFGKDKTKVKDEKEVE). 2 disordered regions span residues 1 to 206 (MSDI…TPDC) and 286 to 332 (KKSL…AKGK). Gly residues predominate over residues 158 to 183 (RGRGGRAAPGASTGGRGRGGGRGGFM). Composition is skewed to basic and acidic residues over residues 186–200 (GERKDPPHKGEKEVP) and 288–298 (SLPERSNKGTE). Positions 202–292 (GTPDCLAGLT…KPVKKSLPER (91 aa)) constitute a BRCT domain. 399–406 (SGTPGIGK) contacts ATP. The tract at residues 858 to 956 (LEPTVDSLRD…GRGSGAKRKR (99 aa)) is disordered. A compositionally biased stretch (acidic residues) spans 866 to 892 (RDEDGEPLADNEEGNGSDAEEDSEEAT). Low complexity predominate over residues 916–925 (KGAGSSGSRK).

The protein belongs to the activator 1 large subunit family. Heterotetramer of subunits RFC2, RFC3, RFC4 and RFC5 that can form a complex with RFC1. In terms of tissue distribution, expressed at high levels in flowers and siliques, and at lower levels in roots, stems and leaves.

It localises to the nucleus. In terms of biological role, plays a role as mediator of transcriptional gene silencing (TGS), DNA replication, DNA repair, hypersensitive response (HR) and telomere length regulation. Is required in meiosis for DNA double-strand break (DSB) repair during meiotic homologous recombination. May participate in the RAD51-mediated recombination intermediate repair process. Is important for lagging strand synthesis. Promotes meiotic recombination via a specific pathway for crossovers (COs) that involves the formation of double Holliday Junction (dHJ) intermediates. The sequence is that of Replication factor C subunit 1 (RFC1) from Arabidopsis thaliana (Mouse-ear cress).